A 578-amino-acid polypeptide reads, in one-letter code: Arginine--tRNA ligase (578 aa).

The 'HIGH' region motif lies at 127–137 (PNLAKEMHVGH).

It belongs to the class-I aminoacyl-tRNA synthetase family. In terms of assembly, monomer.

The protein resides in the cytoplasm. It catalyses the reaction tRNA(Arg) + L-arginine + ATP = L-arginyl-tRNA(Arg) + AMP + diphosphate. This Pseudomonas fluorescens (strain ATCC BAA-477 / NRRL B-23932 / Pf-5) protein is Arginine--tRNA ligase.